The following is a 41-amino-acid chain: Photosystem II reaction center protein Y (41 aa).

The helical transmembrane segment at 5–23 threads the bilayer; sequence VLIVLAPVIIAGSWALFNI.

It belongs to the PsbY family. PSII is composed of 1 copy each of membrane proteins PsbA, PsbB, PsbC, PsbD, PsbE, PsbF, PsbH, PsbI, PsbJ, PsbK, PsbL, PsbM, PsbT, PsbX, PsbY, PsbZ, Psb30/Ycf12, peripheral proteins PsbO, CyanoQ (PsbQ), PsbU, PsbV and a large number of cofactors. It forms dimeric complexes.

The protein localises to the cellular thylakoid membrane. Functionally, loosely associated component of the core of photosystem II (PSII), it is not always seen in crystals. PSII is a light-driven water plastoquinone oxidoreductase, using light energy to abstract electrons from H(2)O, generating a proton gradient subsequently used for ATP formation. The protein is Photosystem II reaction center protein Y of Gloeothece citriformis (strain PCC 7424) (Cyanothece sp. (strain PCC 7424)).